The primary structure comprises 232 residues: Large ribosomal subunit protein uL1 (232 aa).

It belongs to the universal ribosomal protein uL1 family. Part of the 50S ribosomal subunit.

Its function is as follows. Binds directly to 23S rRNA. The L1 stalk is quite mobile in the ribosome, and is involved in E site tRNA release. In terms of biological role, protein L1 is also a translational repressor protein, it controls the translation of the L11 operon by binding to its mRNA. This is Large ribosomal subunit protein uL1 from Liberibacter asiaticus (Citrus greening disease).